The sequence spans 551 residues: Chaperonin GroEL (551 aa).

ATP is bound by residues 30–33 (TLGP), Lys51, 87–91 (DGTTT), Gly415, and Asp496.

It belongs to the chaperonin (HSP60) family. In terms of assembly, forms a cylinder of 14 subunits composed of two heptameric rings stacked back-to-back. Interacts with the co-chaperonin GroES.

The protein resides in the cytoplasm. It carries out the reaction ATP + H2O + a folded polypeptide = ADP + phosphate + an unfolded polypeptide.. In terms of biological role, together with its co-chaperonin GroES, plays an essential role in assisting protein folding. The GroEL-GroES system forms a nano-cage that allows encapsulation of the non-native substrate proteins and provides a physical environment optimized to promote and accelerate protein folding. The sequence is that of Chaperonin GroEL from Maricaulis maris (strain MCS10) (Caulobacter maris).